The chain runs to 339 residues: Fructose-1,6-bisphosphatase class 1 (339 aa).

Mg(2+) contacts are provided by Glu91, Asp113, Leu115, and Asp116. Substrate-binding positions include 116–119, Asn208, and Lys274; that span reads DGSS. Glu280 contacts Mg(2+).

The protein belongs to the FBPase class 1 family. Homotetramer. Mg(2+) is required as a cofactor.

The protein resides in the cytoplasm. The catalysed reaction is beta-D-fructose 1,6-bisphosphate + H2O = beta-D-fructose 6-phosphate + phosphate. The protein operates within carbohydrate biosynthesis; gluconeogenesis. The sequence is that of Fructose-1,6-bisphosphatase class 1 from Cupriavidus pinatubonensis (strain JMP 134 / LMG 1197) (Cupriavidus necator (strain JMP 134)).